A 417-amino-acid polypeptide reads, in one-letter code: NADH-quinone oxidoreductase subunit D (417 aa).

Belongs to the complex I 49 kDa subunit family. In terms of assembly, NDH-1 is composed of 14 different subunits. Subunits NuoB, C, D, E, F, and G constitute the peripheral sector of the complex.

It is found in the cell inner membrane. It carries out the reaction a quinone + NADH + 5 H(+)(in) = a quinol + NAD(+) + 4 H(+)(out). Functionally, NDH-1 shuttles electrons from NADH, via FMN and iron-sulfur (Fe-S) centers, to quinones in the respiratory chain. The immediate electron acceptor for the enzyme in this species is believed to be ubiquinone. Couples the redox reaction to proton translocation (for every two electrons transferred, four hydrogen ions are translocated across the cytoplasmic membrane), and thus conserves the redox energy in a proton gradient. This is NADH-quinone oxidoreductase subunit D from Paracidovorax citrulli (strain AAC00-1) (Acidovorax citrulli).